We begin with the raw amino-acid sequence, 397 residues long: Acetyl-CoA acetyltransferase, cytosolic (397 aa).

Position 1 is an N-acetylmethionine (methionine 1). The active-site Acyl-thioester intermediate is cysteine 92. Lysine 200 is subject to N6-acetyllysine. CoA is bound by residues arginine 223 and serine 226. N6-acetyllysine occurs at positions 233 and 235. A CoA-binding site is contributed by serine 252. Catalysis depends on cysteine 383, which acts as the Proton donor/acceptor.

It belongs to the thiolase-like superfamily. Thiolase family. As to quaternary structure, homotetramer.

The protein localises to the cytoplasm. The protein resides in the cytosol. It catalyses the reaction 2 acetyl-CoA = acetoacetyl-CoA + CoA. The protein operates within lipid metabolism; fatty acid metabolism. Involved in the biosynthetic pathway of cholesterol. In Homo sapiens (Human), this protein is Acetyl-CoA acetyltransferase, cytosolic (ACAT2).